The chain runs to 159 residues: Peptide methionine sulfoxide reductase MsrB (159 aa).

The MsrB domain maps to 22-144; it reads RERLEANLTA…NSVSLQFVKA (123 aa). Residues cysteine 61, cysteine 64, cysteine 110, and cysteine 113 each coordinate Zn(2+). Residue cysteine 133 is the Nucleophile of the active site.

This sequence belongs to the MsrB Met sulfoxide reductase family. Zn(2+) serves as cofactor.

The enzyme catalyses L-methionyl-[protein] + [thioredoxin]-disulfide + H2O = L-methionyl-(R)-S-oxide-[protein] + [thioredoxin]-dithiol. This is Peptide methionine sulfoxide reductase MsrB from Caulobacter vibrioides (strain ATCC 19089 / CIP 103742 / CB 15) (Caulobacter crescentus).